A 1356-amino-acid polypeptide reads, in one-letter code: RHO1 GDP-GTP exchange protein 2 (1356 aa).

Residue Ser-2 is modified to N-acetylserine. Disordered stretches follow at residues Arg-74–Gly-94 and Glu-109–Glu-175. Position 76 is a phosphoserine (Ser-76). Polar residues-rich tracts occupy residues Glu-109–Ser-125 and His-147–Arg-157. Ser-193 is subject to Phosphoserine. 5 disordered regions span residues Leu-202–Ser-291, Ser-303–Asn-362, Ser-383–Ala-409, Gly-531–Lys-571, and Asn-626–Val-645. Over residues Lys-204–Arg-221 the composition is skewed to polar residues. At Ser-223 the chain carries Phosphoserine. A compositionally biased stretch (basic and acidic residues) spans Ser-235 to Gln-244. A compositionally biased stretch (low complexity) spans Gln-250–Asn-265. Residues Val-271 to His-281 are compositionally biased toward polar residues. A compositionally biased stretch (low complexity) spans Ser-282–Ser-291. Residues Ser-303 to Phe-325 show a composition bias toward polar residues. The segment covering His-329 to Ser-338 has biased composition (basic residues). Low complexity-rich tracts occupy residues Asn-339–Asn-362 and Ser-383–Ser-401. Ser-566 and Ser-628 each carry phosphoserine. The region spanning Lys-659–Ala-846 is the DH domain. The CNH domain occupies Thr-1034 to Ile-1336.

Its function is as follows. Stimulates the exchange of RHO1 GDP-bound form into GTP-bound form. The polypeptide is RHO1 GDP-GTP exchange protein 2 (ROM2) (Saccharomyces cerevisiae (strain ATCC 204508 / S288c) (Baker's yeast)).